Here is a 119-residue protein sequence, read N- to C-terminus: Holo-[acyl-carrier-protein] synthase (119 aa).

2 residues coordinate Mg(2+): Asp5 and Glu51.

Belongs to the P-Pant transferase superfamily. AcpS family. Requires Mg(2+) as cofactor.

It localises to the cytoplasm. The catalysed reaction is apo-[ACP] + CoA = holo-[ACP] + adenosine 3',5'-bisphosphate + H(+). Its function is as follows. Transfers the 4'-phosphopantetheine moiety from coenzyme A to a Ser of acyl-carrier-protein. The protein is Holo-[acyl-carrier-protein] synthase of Helicobacter pylori (strain HPAG1).